A 1031-amino-acid polypeptide reads, in one-letter code: MRMVSVRCKLARYLEDLEDIDFKKFKMHLEDYPSQKGCTSIPRGQTEKADHVDLATLMIDFNGEEKAWAMAKWIFAAINRRDLYEKAKREEPEWENANISVLSQEESLEEEWMGLLGYLSRISICRKKKDYCKKYRKYVRSKFQCIKDRNARLGESVNLNKRFTRLRLIKEHRSQQEREHELLAIGRTWAKIQDSPVSSVNLELLFDPEDQHSEPVHTVVFQGAAGIGKTILARKIMLDWASEKLYQDRFDYLFYIHCREVSLGTQRSLGDLIASCCPGPNPPIGKIVSKPSRILFLMDGFDELQGAFDEHTEALCTNWRKVERGDILLSSLIRKRLLPEASLLITTRPVALEKLQHLLGQARHVEILGFSEARRKEYFLKYFSDEQQAREAFRLIQENEILFTMCFIPLVCWIVCTGLKQQMDSGKSLARTSKTTTAVYIFFLSSLLQSQGGSQENHNSATLWGLCSLAADGIWNQKILFQECDLRNHGLQKADVSAFLRMNLFQKEVDCEKFYSFIHMTFQEFFAAMYYLLEEDNHGEMRNTPQACSKLPNRDVKVLLENYGKFEKGYLIFVVRFLFGLINQERTSYLEKKLSCKISQKIRLELLKWIEAKANAKTLQIEPSQLELFYCLYEMQEEDFVQRAMSHFPKIEIKLSTRMDHVVSSFCIENCRHVESLSLRLLHNSPKEEEEEEEVRHSHMDRSVLSDFEVAYSQGLVNYLTSSICRGIFSVLSNNWNLTELNLSGNTLGDPGMNVLCETLQQPGCNIRRLWLGQCCLSHQCCFNISSVLSNNQKLVELDLSHNALGDFGIRLLCVGLRHLFCNLKKLWLVSCCLTSASCEDLASVLSTNHSLTRLYLGENALGDSGVGILCEKVKNPHCNLQKLGLVNSGLTSGCCPALSSVLSTNQNLTHLYLQGNALGDMGVKLLCEGLLHRNCKLQVLELDNCSLTSHCCWDLSTLLTSNQSLRKLCLGNNDLGDLGVMLLCEVLKQQGCLLKSLRLCEMYFNYDTKRALETLQEEKPELTIVFEPSR.

Positions 1–93 constitute a Pyrin domain; that stretch reads MRMVSVRCKL…YEKAKREEPE (93 aa). Ser5 is modified (phosphoserine). Tyr13 carries the post-translational modification Phosphotyrosine. The S-palmitoyl cysteine moiety is linked to residue Cys125. The required for binding to phosphatidylinositol 4-phosphate (PtdIns4P) stretch occupies residues 126 to 129; the sequence is RKKK. A phosphotyrosine mark is found at Tyr131, Tyr135, and Tyr138. Residues 135–207 form the FISNA domain; the sequence is YRKYVRSKFQ…SSVNLELLFD (73 aa). Position 156 is a phosphoserine (Ser156). Thr164 is an ATP binding site. A phosphoserine mark is found at Ser195 and Ser198. The NACHT domain occupies 217–533; sequence HTVVFQGAAG…EFFAAMYYLL (317 aa). 223–230 contributes to the ATP binding site; sequence GAAGIGKT. 2 positions are modified to phosphoserine: Ser262 and Ser292. A Glycyl lysine isopeptide (Lys-Gly) (interchain with G-Cter in ubiquitin) cross-link involves residue Lys321. The residue at position 331 (Ser331) is a Phosphoserine. The short motif at 352-356 is the KFERQ-like motif 1 element; it reads LEKLQ. Lys427 is covalently cross-linked (Glycyl lysine isopeptide (Lys-Gly) (interchain with G-Cter in ubiquitin)). His519 is an ATP binding site. Positions 601–605 match the KFERQ-like motif 2 motif; the sequence is KIRLE. Residue Lys687 forms a Glycyl lysine isopeptide (Lys-Gly) (interchain with G-Cter in ubiquitin) linkage. Ser723 and Ser730 each carry phosphoserine. 5 LRR repeats span residues 737 to 757, 766 to 787, 794 to 814, 823 to 844, and 851 to 871; these read NLTE…NVLC, NIRR…NISS, KLVE…RLLC, NLKK…DLAS, and SLTR…GILC. Positions 793–797 match the KFERQ-like motif 3 motif; that stretch reads QKLVE. Ser801 carries the post-translational modification Phosphoserine. 3 S-palmitoyl cysteine lipidation sites follow: Cys832, Cys833, and Cys839. A Phosphotyrosine modification is found at Tyr856. Lys873 is covalently cross-linked (Glycyl lysine isopeptide (Lys-Gly) (interchain with G-Cter in ubiquitin)). 4 LRR repeats span residues 880–901, 908–929, 937–958, and 965–986; these read NLQK…ALSS, NLTH…LLCE, KLQV…DLST, and SLRK…LLCE. Residue Cys953 is the site of S-palmitoyl cysteine attachment. Lys968 is covalently cross-linked (Glycyl lysine isopeptide (Lys-Gly) (interchain with G-Cter in ubiquitin)). Residues 986 to 990 carry the KFERQ-like motif 4 motif; that stretch reads EVLKQ. Ser1030 bears the Phosphoserine mark.

Belongs to the NLRP family. In terms of assembly, sensor component of NLRP3 inflammasomes; inflammasomes are supramolecular complexes that assemble in the cytosol in response to pathogens and other damage-associated signals and play critical roles in innate immunity and inflammation. The core of NLRP3 inflammasomes consists of a signal sensor component (NLRP3), an adapter (PYCARD/ASC), which recruits an effector pro-inflammatory caspase (CASP1 and, possibly, CASP4 and CASP5). Homodecamer; inactive NLRP3 forms homodecameric double-ring cages that hide pyrin domains within NACHT-LRR rings to avoid premature activation. Interacts (via pyrin domain) with PYCARD/ASC (via pyrin domain); interaction is direct. Interacts (via LRR repeat domain) with NEK7 (via N-terminus); the interaction is required for the formation of the complex NLRP3:PYCARD, oligomerization of PYCARD/ASC and activation of CASP1. Interacts (via LRR repeat domain) with NR4A1/Nur77 (via N-terminus); the interaction is direct, requires activation of NR4A1 by its ligands NBRE-containing dsDNA and lipopolysaccharide, and stimulates the association of NLRP3 with NEK7 for non-canonical NLRP3 inflammasome activation. Interacts with CARD8; leading to inhibit formation of the NLRP3 inflammasome. Interacts with MEFV; this interaction targets NLRP3 to degradation by autophagy, hence preventing excessive IL1B- and IL18-mediated inflammation. Interacts with EIF2AK2/PKR; this interaction requires EIF2AK2 activity, is accompanied by EIF2AK2 autophosphorylation and promotes inflammasome assembly in response to specific stimuli. Interacts with GBP5 (via DAPIN domain); this interaction promotes inflammasome assembly in response to microbial and soluble, but not crystalline, agents. Interacts with PML (isoform PML-1) (via the leucine-rich repeat (LRR) domain); PML-mediated increase in NLRP3 inflammasome activation does not depend upon this interaction. Interacts (via NACHT domain) with DHX33 (via DEAH box); NLRP3 activation in presence of cytosolic dsRNA is mediated by DHX33. Interacts (via NACHT and LRR domains) with ARRB2; this interaction is direct and inducible by polyunsaturated fatty acids (PUFAs). Interacts (via NACHT domain) with DDX3X under both LPS-primed and inflammasome-activating conditions. Interacts with IRF4 (via the LRR domain); this interaction is direct and is required for optimal IRF4 binding to IL4 promoter and efficient IL4 transactivation during differentiation of Th2 helper T-cells. Interacts with MAVS; promoting localization to mitochondria and activation of the NLRP3 inflammasome. Interacts with MARK4; promoting localization of NLRP3 to the microtubule organizing center (MTOC). Interacts with TRIM50; this interaction also promotes NLRP3 oligomerization and subsequent inflammasome activation. Interacts with IRGM; preventing NLRP3 inflammasome assembly and promoting NLRP3 degradation. Interacts (via KFERQ-like motifs) with HSPA8/HSC70; promoting NLRP3 degradation by the chaperone-mediated autophagy pathway. Interacts (via NACHT and LLR domains) with ABHD8; this interaction is enhanced in the presence of NLRP3 inflammasome inducers, such as ATP, nigericin, silica, or alum. Interaction with ABHD8 leads the recruitment of ZDHHC12, hence facilitating NLRP3 palmitoylation and degradation by the chaperone-mediated autophagy pathway (CMA), therefore attenuating NLRP3 inflammasome activation. Phosphorylation at Ser-198 by MAPK8/JNK1 increases inflammasome activation by promoting deubiquitination by BRCC3 and NLRP3 homooligomerization. Phosphorylation at Ser-801 by CSNK1A1 prevents inflammasome activation by preventing NEK7 recruitment. Phosphorylation at Ser-5 in the pyrin domain inhibits homomultimerization of NLRP3 and activation of the NLRP3 inflammasome: dephosphorylation by protein phosphatase 2A (PP2A) promotes assembly of the NLRP3 inflammasome. Phosphorylation at Ser-292 by PKD/PRKD1 promotes NLRP3 inflammasome assembly. Phosphorylation by ERK1/MAPK3 promotes NLRP3 inflammasome assembly. Phosphorylation by BTK (at Tyr-131, Tyr-135 and Tyr-138) in the region that mediates binding to phosphatidylinositol phosphate, promotes relocalization of NLRP3 and assembly of the NLRP3 inflammasome. Phosphorylation at Tyr-856 inhibits NLRP3 inflammasome assembly: dephosphorylation by PTPN22 promotes inflammasome activation. Phosphorylated by LATS1 and LATS2 at Ser-262 following palmitoylation by ZDHHC1, promoting its relocalization to the microtubule organizing center (MTOC), where NLRP3 is activated by NEK7, leading to inflammasome assembly and activation. In terms of processing, ubiquitinated; undergoes both 'Lys-48'- and 'Lys-63'-linked polyubiquitination. Ubiquitination does not lead to degradation, but inhibits inflammasome activation. Deubiquitination is catalyzed by BRCC3 and associated with NLRP3 activation and inflammasome assembly. This process can be induced by the activation of Toll-like receptors (by LPS), through a non-transcriptional pathway dependent on the mitochondrial production of reactive oxygen species, and by ATP. Ubiquitinated by TRIM31 via 'Lys-48'-linked ubiquitination, leading to its degradation by the proteasome. Ubiquitinated at Lys-687 by the SCF(FBXL2) complex, leading to its degradation by the proteasome. Ubiquitinated by TRIM35 via 'lys-48' and 'Lys-63'-linked ubiquitination leading to inhibition of NLRP3 inflammasome activation. Undergoes 'Lys-27'-linked polyubiquitination by MARCHF5, leading to NLRP3-NEK7 complex formation and NLRP3 oligomerization. Post-translationally, palmitoylation by ZDHHC12 promotes NLRP3 degradation by the chaperone-mediated autophagy pathway (CMA) and therefore limits NLRP3 inflammasome activation. Interaction with ZDHHC12, and hence NLRP3 palmitoylation, is greatly enhanced by ABHD8. Following palmitoylation, HSPA8/HSC70 recognizes and binds the KFERQ-like motifs on NLRP3 and promotes NLRP3 recruitment to lysosomes, where it is degraded via the chaperone-mediated autophagy pathway in a LAMP2-dependent process. Palmitoylation at Cys-832 and Cys-833 by ZDHHC5 enhances its binding to NEK7 leading to inflammasome assembly and activation. Palmitoylation at Cys-125 and Cys-953 by ZDHHC1 facilitates phosphorylation at Ser-262 by LATS1 and LATS2, promoting its relocalization to the microtubule organizing center (MTOC), where NLRP3 is activated by NEK7, leading to inflammasome assembly and activation. Depalmitoylated by ABHD17A. Degraded via selective autophagy following interaction with IRGM. IRGM promotes NLRP3 recruitment to autophagosome membranes, promoting its SQSTM1/p62-dependent autophagy-dependent degradation.

It is found in the cytoplasm. Its subcellular location is the cytosol. The protein resides in the inflammasome. It localises to the cytoskeleton. The protein localises to the microtubule organizing center. It is found in the golgi apparatus membrane. Its subcellular location is the endoplasmic reticulum. The protein resides in the mitochondrion. It localises to the secreted. The protein localises to the nucleus. The enzyme catalyses ATP + H2O = ADP + phosphate + H(+). Under resting conditions, NLRP3 binds ADP and is autoinhibited. Inactive NLRP3 forms homodecameric double-ring cages that hide pyrin domains within NACHT-LRR rings to avoid premature activation. NLRP3 activation stimuli include extracellular ATP, nigericin, reactive oxygen species, crystals of monosodium urate or cholesterol, amyloid-beta fibers, environmental or industrial particles and nanoparticles, such as asbestos, silica, aluminum salts, cytosolic dsRNA, etc. Almost all stimuli trigger intracellular K(+) efflux. These stimuli lead to membrane perturbations that induce activation of NLRP3. Upon activation, NLRP3 is transported to microtubule organizing center (MTOC), where it is unlocked by NEK7, leading to its relocalization to dispersed trans-Golgi network (dTGN) vesicle membranes and recruitment of PYCARD/ASC for the formation of an active inflammasome complex. NEK7-activated NLRP3 forms a disk-shaped inflammasome. NLRP3 and PYCARD/ASC interact via their respective pyrin domains; interaction initiates speck formation (nucleation) which greatly enhances further addition of soluble PYCARD/ASC molecules to the speck in a prion-like polymerization process. Clustered PYCARD/ASC nucleates the formation of CASP1 filaments through the interaction of their respective CARD domains, acting as a platform for CASP1 polymerization and activation. Active CASP1 then processes IL1B and IL18 precursors, leading to the release of mature cytokines in the extracellular milieu and inflammatory response. NLRP3 inflammasome assembly is inhibited by IRGM, which impedes NLRP3 oligomerization. NLRP3 inflammasome is inhibited by cyclic AMP (cAMP), which directly binds NLRP3; inhibition is relieved by calcium-sensing receptor CASR, which inhibits production of cAMP. Specifically inhibited by sulfonylurea MCC950 (also named CP-456,773, CRID3), a potent and specific small-molecule inhibitor of the NLRP3 inflammasome that acts by preventing ATP hydrolysis. Functionally, sensor component of the NLRP3 inflammasome, which mediates inflammasome activation in response to defects in membrane integrity, leading to secretion of inflammatory cytokines IL1B and IL18 and pyroptosis. In response to pathogens and other damage-associated signals that affect the integrity of membranes, initiates the formation of the inflammasome polymeric complex composed of NLRP3, CASP1 and PYCARD/ASC. Recruitment of pro-caspase-1 (proCASP1) to the NLRP3 inflammasome promotes caspase-1 (CASP1) activation, which subsequently cleaves and activates inflammatory cytokines IL1B and IL18 and gasdermin-D (GSDMD), promoting cytokine secretion and pyroptosis. Activation of NLRP3 inflammasome is also required for HMGB1 secretion; stimulating inflammatory responses. Under resting conditions, ADP-bound NLRP3 is autoinhibited. NLRP3 activation stimuli include extracellular ATP, nigericin, reactive oxygen species, crystals of monosodium urate or cholesterol, amyloid-beta fibers, environmental or industrial particles and nanoparticles, such as asbestos, silica, aluminum salts, cytosolic dsRNA, etc. Almost all stimuli trigger intracellular K(+) efflux. These stimuli lead to membrane perturbation and activation of NLRP3. Upon activation, NLRP3 is transported to microtubule organizing center (MTOC), where it is unlocked by NEK7, leading to its relocalization to dispersed trans-Golgi network (dTGN) vesicle membranes and formation of an active inflammasome complex. Associates with dTGN vesicle membranes by binding to phosphatidylinositol 4-phosphate (PtdIns4P). Shows ATPase activity. Its function is as follows. Independently of inflammasome activation, regulates the differentiation of T helper 2 (Th2) cells and has a role in Th2 cell-dependent asthma and tumor growth. During Th2 differentiation, required for optimal IRF4 binding to IL4 promoter and for IRF4-dependent IL4 transcription. Binds to the consensus DNA sequence 5'-GRRGGNRGAG-3'. May also participate in the transcription of IL5, IL13, GATA3, CCR3, CCR4 and MAF. The protein is NACHT, LRR and PYD domains-containing protein 3 (NLRP3) of Bos taurus (Bovine).